Reading from the N-terminus, the 227-residue chain is Cytochrome c oxidase subunit 2 (227 aa).

Residues 1 to 14 are Mitochondrial intermembrane-facing; sequence MANHSQLGFQDASS. A helical membrane pass occupies residues 15-45; it reads PIMEELVEFHDHALMVALAICSLVLYLLTLM. Topologically, residues 46–58 are mitochondrial matrix; that stretch reads LTQKLSSNTVDAQ. The helical transmembrane segment at 59–86 threads the bilayer; sequence EVELIWTILPAIVLVLLALPSLQILYMM. Residues 87–227 are Mitochondrial intermembrane-facing; that stretch reads DEIEEPDLTL…FETWSSLLSS (141 aa). His-160, Cys-195, Glu-197, Cys-199, His-203, and Met-206 together coordinate Cu cation. Glu-197 serves as a coordination point for Mg(2+).

This sequence belongs to the cytochrome c oxidase subunit 2 family. Component of the cytochrome c oxidase (complex IV, CIV), a multisubunit enzyme composed of 14 subunits. The complex is composed of a catalytic core of 3 subunits MT-CO1, MT-CO2 and MT-CO3, encoded in the mitochondrial DNA, and 11 supernumerary subunits COX4I, COX5A, COX5B, COX6A, COX6B, COX6C, COX7A, COX7B, COX7C, COX8 and NDUFA4, which are encoded in the nuclear genome. The complex exists as a monomer or a dimer and forms supercomplexes (SCs) in the inner mitochondrial membrane with NADH-ubiquinone oxidoreductase (complex I, CI) and ubiquinol-cytochrome c oxidoreductase (cytochrome b-c1 complex, complex III, CIII), resulting in different assemblies (supercomplex SCI(1)III(2)IV(1) and megacomplex MCI(2)III(2)IV(2)). Found in a complex with TMEM177, COA6, COX18, COX20, SCO1 and SCO2. Interacts with TMEM177 in a COX20-dependent manner. Interacts with COX20. Interacts with COX16. Cu cation is required as a cofactor.

It is found in the mitochondrion inner membrane. It catalyses the reaction 4 Fe(II)-[cytochrome c] + O2 + 8 H(+)(in) = 4 Fe(III)-[cytochrome c] + 2 H2O + 4 H(+)(out). Component of the cytochrome c oxidase, the last enzyme in the mitochondrial electron transport chain which drives oxidative phosphorylation. The respiratory chain contains 3 multisubunit complexes succinate dehydrogenase (complex II, CII), ubiquinol-cytochrome c oxidoreductase (cytochrome b-c1 complex, complex III, CIII) and cytochrome c oxidase (complex IV, CIV), that cooperate to transfer electrons derived from NADH and succinate to molecular oxygen, creating an electrochemical gradient over the inner membrane that drives transmembrane transport and the ATP synthase. Cytochrome c oxidase is the component of the respiratory chain that catalyzes the reduction of oxygen to water. Electrons originating from reduced cytochrome c in the intermembrane space (IMS) are transferred via the dinuclear copper A center (CU(A)) of subunit 2 and heme A of subunit 1 to the active site in subunit 1, a binuclear center (BNC) formed by heme A3 and copper B (CU(B)). The BNC reduces molecular oxygen to 2 water molecules using 4 electrons from cytochrome c in the IMS and 4 protons from the mitochondrial matrix. This is Cytochrome c oxidase subunit 2 (MT-CO2) from Coturnix japonica (Japanese quail).